The chain runs to 824 residues: ABC transporter B family member 7 (824 aa).

Positions 41-101 are disordered; the sequence is RNSVKFNLDT…NKNNKNKINN (61 aa). Over residues 63–101 the composition is skewed to low complexity; that stretch reads NNNKNNNNNNNNNNNNNNNNNNNNNNNNNNKNNKNKINN. 6 helical membrane passes run 164-184, 252-272, 325-345, 347-367, 431-451, and 461-481; these read IWYF…QLAL, WIII…LLFT, LSTL…LVFL, WKVT…FLVF, AFWI…IYGF, and ILLL…NGLI. One can recognise an ABC transmembrane type-1 domain in the interval 167–489; it reads FVFAFLALSI…LIGSINEIQK (323 aa). One can recognise an ABC transporter domain in the interval 521–767; it reads ISFDNVYFNN…STSFYVTSVL (247 aa). 570–576 is a binding site for ATP; sequence GPSQSKE. The segment at 772 to 813 is disordered; it reads NKYNNNNNNNNNNNNNNNNNNNNNNNNNNNNNNNNNNNNINN.

The protein belongs to the ABC transporter superfamily. ABCB family.

It is found in the membrane. In Dictyostelium discoideum (Social amoeba), this protein is ABC transporter B family member 7 (abcB7).